The sequence spans 138 residues: Homeobox protein HD-11 (138 aa).

A DNA-binding region (homeobox) is located at residues 30–89; it reads CTGKQMRKTRLQTCVLNRIFEISRFPSSKTIVDLALLINVHPKSIQKWFQNTRQAIRKKG.

Its subcellular location is the nucleus. The polypeptide is Homeobox protein HD-11 (HD-11) (Encephalitozoon cuniculi (strain GB-M1) (Microsporidian parasite)).